The sequence spans 558 residues: 2-isopropylmalate synthase (558 aa).

In terms of domain architecture, Pyruvate carboxyltransferase spans 31 to 305; it reads PRWCSTDLRD…YPNLDFSDMR (275 aa). Mg(2+) is bound by residues D40, H244, H246, and N280. Positions 439–558 are regulatory domain; it reads NPDDKGQMKL…NACHPLYKEA (120 aa).

Belongs to the alpha-IPM synthase/homocitrate synthase family. LeuA type 2 subfamily. In terms of assembly, homodimer. The cofactor is Mg(2+).

It is found in the cytoplasm. The enzyme catalyses 3-methyl-2-oxobutanoate + acetyl-CoA + H2O = (2S)-2-isopropylmalate + CoA + H(+). It participates in amino-acid biosynthesis; L-leucine biosynthesis; L-leucine from 3-methyl-2-oxobutanoate: step 1/4. Catalyzes the condensation of the acetyl group of acetyl-CoA with 3-methyl-2-oxobutanoate (2-ketoisovalerate) to form 3-carboxy-3-hydroxy-4-methylpentanoate (2-isopropylmalate). The polypeptide is 2-isopropylmalate synthase (Marinomonas sp. (strain MWYL1)).